Consider the following 322-residue polypeptide: Ferredoxin--NADP reductase (322 aa).

FAD contacts are provided by Thr-12, Glu-31, Gln-39, Tyr-44, Ala-86, Phe-119, and Thr-317.

This sequence belongs to the ferredoxin--NADP reductase type 2 family. In terms of assembly, homodimer. The cofactor is FAD.

The enzyme catalyses 2 reduced [2Fe-2S]-[ferredoxin] + NADP(+) + H(+) = 2 oxidized [2Fe-2S]-[ferredoxin] + NADPH. The polypeptide is Ferredoxin--NADP reductase (Acholeplasma laidlawii (strain PG-8A)).